The chain runs to 59 residues: Putative potassium channel toxin Ts22 (59 aa).

A signal peptide spans 1–22 (MKAFYGILIIFILISMIDLSQQ). Cystine bridges form between Cys29/Cys50, Cys35/Cys55, and Cys39/Cys57.

The protein belongs to the short scorpion toxin superfamily. Potassium channel inhibitor family. Alpha-KTx 04 subfamily. Expressed by the venom gland.

The protein localises to the secreted. Potently blocks voltage-gated potassium channels (Kv). In Tityus serrulatus (Brazilian scorpion), this protein is Putative potassium channel toxin Ts22.